Reading from the N-terminus, the 25-residue chain is Pregnancy-associated glycoprotein 72 (25 aa).

2 N-linked (GlcNAc...) asparagine glycosylation sites follow: N4 and N21.

The protein belongs to the peptidase A1 family. Post-translationally, N-glycosylated. In terms of tissue distribution, expressed in chorionic epithelium (trophectoderm).

Its subcellular location is the secreted. The protein localises to the extracellular space. This chain is Pregnancy-associated glycoprotein 72, found in Bison bison (American bison).